Consider the following 153-residue polypeptide: Actin-related protein 2/3 complex subunit 5-like protein (153 aa).

Serine 64 carries the phosphoserine modification.

This sequence belongs to the ARPC5 family. As to quaternary structure, may be a component of the Arp2/3 complex in which it may replace ARPC5.

It localises to the cytoplasm. Its subcellular location is the cytoskeleton. May function as component of the Arp2/3 complex which is involved in regulation of actin polymerization and together with an activating nucleation-promoting factor (NPF) mediates the formation of branched actin networks. This is Actin-related protein 2/3 complex subunit 5-like protein (Arpc5l) from Mus musculus (Mouse).